Here is a 322-residue protein sequence, read N- to C-terminus: Lymphokine-activated killer T-cell-originated protein kinase (322 aa).

M1 carries the post-translational modification N-acetylmethionine. Residues T9 and T24 each carry the phosphothreonine modification. S32 bears the Phosphoserine mark. Positions 32 to 322 constitute a Protein kinase domain; the sequence is SPFMQKLGFG…HIVEALETDV (291 aa). 38-46 contacts ATP; the sequence is LGFGTGVNV. Position 59 is a phosphoserine (S59). Residue K64 coordinates ATP. The active-site Proton acceptor is D167. K169 is covalently cross-linked (Glycyl lysine isopeptide (Lys-Gly) (interchain with G-Cter in SUMO2)). Residues 320 to 322 are PDZ-interaction; sequence TDV.

Belongs to the protein kinase superfamily. STE Ser/Thr protein kinase family. MAP kinase kinase subfamily. In terms of assembly, interacts with DLG1 and TP53. Post-translationally, phosphorylated; in a cell-cycle dependent manner at mitosis. Expressed in the testis and placenta. In the testis, restrictedly expressed in outer cell layer of seminiferous tubules.

It carries out the reaction L-seryl-[protein] + ATP = O-phospho-L-seryl-[protein] + ADP + H(+). It catalyses the reaction L-threonyl-[protein] + ATP = O-phospho-L-threonyl-[protein] + ADP + H(+). The catalysed reaction is L-tyrosyl-[protein] + ATP = O-phospho-L-tyrosyl-[protein] + ADP + H(+). Activated by phosphorylation. Its function is as follows. Phosphorylates MAP kinase p38. Seems to be active only in mitosis. May also play a role in the activation of lymphoid cells. When phosphorylated, forms a complex with TP53, leading to TP53 destabilization and attenuation of G2/M checkpoint during doxorubicin-induced DNA damage. This chain is Lymphokine-activated killer T-cell-originated protein kinase (PBK), found in Homo sapiens (Human).